Consider the following 357-residue polypeptide: UDP-N-acetylglucosamine--N-acetylmuramyl-(pentapeptide) pyrophosphoryl-undecaprenol N-acetylglucosamine transferase (357 aa).

UDP-N-acetyl-alpha-D-glucosamine is bound by residues Thr-14–Gly-16, Asn-128, Arg-169, Ser-193, Ile-248, and Gln-292.

This sequence belongs to the glycosyltransferase 28 family. MurG subfamily.

Its subcellular location is the cell inner membrane. It catalyses the reaction di-trans,octa-cis-undecaprenyl diphospho-N-acetyl-alpha-D-muramoyl-L-alanyl-D-glutamyl-meso-2,6-diaminopimeloyl-D-alanyl-D-alanine + UDP-N-acetyl-alpha-D-glucosamine = di-trans,octa-cis-undecaprenyl diphospho-[N-acetyl-alpha-D-glucosaminyl-(1-&gt;4)]-N-acetyl-alpha-D-muramoyl-L-alanyl-D-glutamyl-meso-2,6-diaminopimeloyl-D-alanyl-D-alanine + UDP + H(+). It participates in cell wall biogenesis; peptidoglycan biosynthesis. Cell wall formation. Catalyzes the transfer of a GlcNAc subunit on undecaprenyl-pyrophosphoryl-MurNAc-pentapeptide (lipid intermediate I) to form undecaprenyl-pyrophosphoryl-MurNAc-(pentapeptide)GlcNAc (lipid intermediate II). In Bdellovibrio bacteriovorus (strain ATCC 15356 / DSM 50701 / NCIMB 9529 / HD100), this protein is UDP-N-acetylglucosamine--N-acetylmuramyl-(pentapeptide) pyrophosphoryl-undecaprenol N-acetylglucosamine transferase.